The sequence spans 481 residues: Exodeoxyribonuclease I (481 aa).

One can recognise an Exonuclease domain in the interval Leu12–Ile193. Mg(2+)-binding residues include Asp15, Glu17, and Asp186. Glu17 contacts substrate. One can recognise an ExoI SH3-like domain in the interval Pro202–Ala350. An ExoI C-terminal domain is found at Asn356–Arg471.

In terms of assembly, monomer. Interacts with ssb (via C-terminus); this interaction stimulates the exonuclease activity by recruiting the enzyme to its substrate. It depends on Mg(2+) as a cofactor.

The enzyme catalyses Exonucleolytic cleavage in the 3'- to 5'-direction to yield nucleoside 5'-phosphates.. Functionally, degrades single-stranded DNA (ssDNA) in a highly processive manner. Also functions as a DNA deoxyribophosphodiesterase that releases deoxyribose-phosphate moieties following the cleavage of DNA at an apurinic/apyrimidinic (AP) site by either an AP endonuclease or AP lyase. This is Exodeoxyribonuclease I (sbcB) from Buchnera aphidicola subsp. Baizongia pistaciae (strain Bp).